The sequence spans 150 residues: uncharacterized protein (150 aa).

A helical membrane pass occupies residues 19–39 (SLGMCVILIDGLIVLTAAFVF).

It to B.subtilis YpjC, YqfU and YitT.

It is found in the cell membrane. This is an uncharacterized protein from Bacillus sp. (strain PS3).